The chain runs to 260 residues: Exosome complex component Rrp42 (260 aa).

Belongs to the RNase PH family. Rrp42 subfamily. In terms of assembly, component of the archaeal exosome complex. Forms a hexameric ring-like arrangement composed of 3 Rrp41-Rrp42 heterodimers. The hexameric ring associates with a trimer of Rrp4 and/or Csl4 subunits.

It is found in the cytoplasm. Functionally, non-catalytic component of the exosome, which is a complex involved in RNA degradation. Contributes to the structuring of the Rrp41 active site. The protein is Exosome complex component Rrp42 of Thermoplasma volcanium (strain ATCC 51530 / DSM 4299 / JCM 9571 / NBRC 15438 / GSS1).